Reading from the N-terminus, the 47-residue chain is MKKVPLNCEVCGNRNYNVPKKEGSATRLTLKKYCPKCNSHTVHKESK.

This sequence belongs to the bacterial ribosomal protein bL33 family.

The chain is Large ribosomal subunit protein bL33 from Staphylococcus capitis.